A 210-amino-acid polypeptide reads, in one-letter code: Tetraspanin-31 (210 aa).

The Cytoplasmic segment spans residues 1–12 (MVCGGFACSKNA). Residues 13 to 33 (LCALNVVYMLVSLLLIGVAAW) form a helical membrane-spanning segment. Residues 34 to 44 (GKGLGLVSSIH) lie on the Extracellular side of the membrane. The chain crosses the membrane as a helical span at residues 45 to 65 (IIGGVIAVGVFLLLIAVAGLV). The Cytoplasmic portion of the chain corresponds to 66 to 72 (GAVNHHQ). The helical transmembrane segment at 73 to 93 (VLLFFYMIILGLVFIFQFVIS) threads the bilayer. Over 94 to 173 (CSCLAINRSK…FLKHSDEALK (80 aa)) the chain is Extracellular. N-linked (GlcNAc...) asparagine glycosylation is found at Asn-100, Asn-109, Asn-117, and Asn-134. A helical membrane pass occupies residues 174-194 (ILGGVGLFFSFTEILGVWLAM). The Cytoplasmic segment spans residues 195-210 (RFRNQKDPRANPSAFL).

It belongs to the tetraspanin (TM4SF) family.

The protein localises to the membrane. The polypeptide is Tetraspanin-31 (TSPAN31) (Homo sapiens (Human)).